The sequence spans 628 residues: 1-deoxy-D-xylulose-5-phosphate synthase (628 aa).

Residues H72 and 113–115 each bind thiamine diphosphate; that span reads GHS. Residue D144 participates in Mg(2+) binding. Thiamine diphosphate contacts are provided by residues 145-146, N173, Y284, and E363; that span reads GA. N173 lines the Mg(2+) pocket.

The protein belongs to the transketolase family. DXPS subfamily. As to quaternary structure, homodimer. The cofactor is Mg(2+). Thiamine diphosphate serves as cofactor.

It carries out the reaction D-glyceraldehyde 3-phosphate + pyruvate + H(+) = 1-deoxy-D-xylulose 5-phosphate + CO2. It participates in metabolic intermediate biosynthesis; 1-deoxy-D-xylulose 5-phosphate biosynthesis; 1-deoxy-D-xylulose 5-phosphate from D-glyceraldehyde 3-phosphate and pyruvate: step 1/1. In terms of biological role, catalyzes the acyloin condensation reaction between C atoms 2 and 3 of pyruvate and glyceraldehyde 3-phosphate to yield 1-deoxy-D-xylulose-5-phosphate (DXP). This is 1-deoxy-D-xylulose-5-phosphate synthase from Brevibacillus brevis (strain 47 / JCM 6285 / NBRC 100599).